We begin with the raw amino-acid sequence, 329 residues long: Phenylalanine--tRNA ligase alpha subunit (329 aa).

E254 contributes to the Mg(2+) binding site.

It belongs to the class-II aminoacyl-tRNA synthetase family. Phe-tRNA synthetase alpha subunit type 1 subfamily. Tetramer of two alpha and two beta subunits. Mg(2+) is required as a cofactor.

It is found in the cytoplasm. It catalyses the reaction tRNA(Phe) + L-phenylalanine + ATP = L-phenylalanyl-tRNA(Phe) + AMP + diphosphate + H(+). The sequence is that of Phenylalanine--tRNA ligase alpha subunit from Histophilus somni (strain 2336) (Haemophilus somnus).